A 124-amino-acid chain; its full sequence is Large ribosomal subunit protein bL12 (124 aa).

This sequence belongs to the bacterial ribosomal protein bL12 family. In terms of assembly, homodimer. Part of the ribosomal stalk of the 50S ribosomal subunit. Forms a multimeric L10(L12)X complex, where L10 forms an elongated spine to which 2 to 4 L12 dimers bind in a sequential fashion. Binds GTP-bound translation factors.

In terms of biological role, forms part of the ribosomal stalk which helps the ribosome interact with GTP-bound translation factors. Is thus essential for accurate translation. The sequence is that of Large ribosomal subunit protein bL12 from Borreliella burgdorferi (strain ATCC 35210 / DSM 4680 / CIP 102532 / B31) (Borrelia burgdorferi).